Consider the following 473-residue polypeptide: Serine carboxypeptidase-like 42 (473 aa).

Positions Met-1 to Gly-26 are cleaved as a signal peptide. Disulfide bonds link Cys-87/Cys-346, Cys-247/Cys-264, and Cys-289/Cys-314. Asn-138 carries N-linked (GlcNAc...) asparagine glycosylation. Ser-179 is a catalytic residue. A glycan (N-linked (GlcNAc...) asparagine) is linked at Asn-259. N-linked (GlcNAc...) asparagine glycosylation is found at Asn-335 and Asn-351. Catalysis depends on residues Asp-383 and His-440. An N-linked (GlcNAc...) asparagine glycan is attached at Asn-465.

Belongs to the peptidase S10 family. As to expression, expression not detected.

The protein resides in the secreted. Probable carboxypeptidase. This chain is Serine carboxypeptidase-like 42 (SCPL42), found in Arabidopsis thaliana (Mouse-ear cress).